A 31-amino-acid polypeptide reads, in one-letter code: Cyclotide vpub-A (31 aa).

The segment at residues Gly1–Asn31 is a cross-link (cyclopeptide (Gly-Asn)). Intrachain disulfides connect Cys5–Cys21, Cys9–Cys23, and Cys14–Cys28.

It belongs to the cyclotide family. Bracelet subfamily. Post-translationally, this is a cyclic peptide.

Its function is as follows. Probably participates in a plant defense mechanism. The protein is Cyclotide vpub-A of Viola pubescens (Downy yellow violet).